The chain runs to 191 residues: MAP6 domain-containing protein 1 (191 aa).

Residues C5, C10, and C11 are each lipidated (S-palmitoyl cysteine). The tract at residues 31–106 is disordered; it reads HGYSDPGSEE…RGQSSAPPTR (76 aa). 2 positions are modified to phosphoserine: S38 and S41. Mn stretches follow at residues 123-136 and 158-170; these read TTSYRQEFQAWTGV and DPSPGASFQVPEV. S160 bears the Phosphoserine mark.

It belongs to the STOP family. As to quaternary structure, interacts with calmodulin. Palmitoylated. Palmitoylation enhances association with microtubules. As to expression, expressed in brain. Found in neurons in primary cultures, but absent in glial cells.

It is found in the golgi apparatus. The protein resides in the cytoplasm. It localises to the cytoskeleton. May have microtubule-stabilizing activity. The chain is MAP6 domain-containing protein 1 (Map6d1) from Mus musculus (Mouse).